The chain runs to 291 residues: Homoserine kinase (291 aa).

80–90 is a binding site for ATP; sequence PLARGLGSSST.

The protein belongs to the GHMP kinase family. Homoserine kinase subfamily.

It localises to the cytoplasm. The enzyme catalyses L-homoserine + ATP = O-phospho-L-homoserine + ADP + H(+). The protein operates within amino-acid biosynthesis; L-threonine biosynthesis; L-threonine from L-aspartate: step 4/5. In terms of biological role, catalyzes the ATP-dependent phosphorylation of L-homoserine to L-homoserine phosphate. The sequence is that of Homoserine kinase from Lactiplantibacillus plantarum (strain ATCC BAA-793 / NCIMB 8826 / WCFS1) (Lactobacillus plantarum).